Consider the following 169-residue polypeptide: Transcription antitermination protein NusB (169 aa).

Belongs to the NusB family.

Functionally, involved in transcription antitermination. Required for transcription of ribosomal RNA (rRNA) genes. Binds specifically to the boxA antiterminator sequence of the ribosomal RNA (rrn) operons. This is Transcription antitermination protein NusB from Rhodococcus opacus (strain B4).